Here is a 465-residue protein sequence, read N- to C-terminus: Paired box protein Pax-8 (465 aa).

The paired DNA-binding region spans 26–152 (GHGGLNQLGG…SSINRIIRTK (127 aa)). Positions 29 to 85 (GLNQLGGAFVNGRPLPEVVRQRIVDLAHQGVRPCDISRQLRVSHGCVSKILGRYYET) are PAI subdomain. The tract at residues 104–152 (KVVEKIGDYKRQNPTMFAWEIRDRLLTDGVCDNDTVPSVSSINRIIRTK) is RED subdomain. The tract at residues 206–227 (PSADGKRKLDDSDQESCRLSID) is disordered.

Expression starts at late gastrula stages in cells fated to become the primordia of the otic system and the pronephric kidney. Expression is maintained in these two structures through late tailbud stages. Does not appear to be expressed in the thyroid gland.

The protein localises to the nucleus. Probable transcription factor. Involved in kidney development, acting synergistically with lhx1/lim-1 to establish the pronephric primordium in late gastrulae/early neurulae. The chain is Paired box protein Pax-8 from Xenopus laevis (African clawed frog).